Consider the following 1534-residue polypeptide: Dicer-like protein 1 (1534 aa).

The segment at 36-70 is disordered; that stretch reads PSAEPGVEHDQISPGESDEEIEENISDQNNSSSQK. A compositionally biased stretch (acidic residues) spans 51 to 60; the sequence is ESDEEIEENI. The Helicase ATP-binding domain occupies 130–311; it reads LFERAKAQNT…AAATRLETLL (182 aa). 143 to 150 serves as a coordination point for ATP; that stretch reads LDTGSGKT. The DEAH box signature appears at 256-259; sequence DEAH. The Helicase C-terminal domain occupies 456 to 613; the sequence is ELSKHFSHAP…FCETLPEDRI (158 aa). Residues 648–738 enclose the Dicer dsRNA-binding fold domain; that stretch reads AIAILARYAS…KSIYHKRLPA (91 aa). The PAZ domain occupies 888 to 1016; it reads KTVTFVQEND…ICAEPLKISA (129 aa). RNase III domains lie at 1054–1199 and 1250–1402; these read SDYA…LSGG and ALQV…VDSD. Mg(2+)-binding residues include E1291, D1388, and E1391. Positions 1436 to 1504 constitute a DRBM domain; that stretch reads TFLHNRLANE…SERALVVLDG (69 aa). Positions 1448, 1475, 1516, and 1518 each coordinate Zn(2+).

Belongs to the helicase family. Dicer subfamily. It depends on Mg(2+) as a cofactor. The cofactor is Mn(2+).

Functionally, dicer-like endonuclease involved in cleaving double-stranded RNA in the RNA interference (RNAi) pathway. Produces 21 to 25 bp dsRNAs (siRNAs) which target the selective destruction of homologous RNAs leading to sequence-specific suppression of gene expression, called post-transcriptional gene silencing (PTGS). Part of a broad host defense response against viral infection and transposons. This is Dicer-like protein 1 (dcl1) from Aspergillus clavatus (strain ATCC 1007 / CBS 513.65 / DSM 816 / NCTC 3887 / NRRL 1 / QM 1276 / 107).